The following is a 599-amino-acid chain: Beta-myrcene synthase, chloroplastic (599 aa).

A chloroplast-targeting transit peptide spans 1-34; the sequence is MWSTISISMNVAILKKPLNFLHNSNNKASNPRCV. Mg(2+)-binding residues include D352, D356, D496, T500, and E504. Positions 352 to 356 match the DDXXD motif motif; sequence DDVYD.

This sequence belongs to the terpene synthase family. Mg(2+) serves as cofactor. The cofactor is Mn(2+).

It localises to the plastid. It is found in the chloroplast. The catalysed reaction is (2E)-geranyl diphosphate = beta-myrcene + diphosphate. The protein operates within secondary metabolite biosynthesis; terpenoid biosynthesis. Functionally, monoterpene synthase that catalyzes the formation of beta-myrcene from geranyl diphosphate. This is Beta-myrcene synthase, chloroplastic (MYS) from Ocimum basilicum (Sweet basil).